The sequence spans 66 residues: Spore coat protein C (66 aa).

The protein to B.subtilis protein YnzH.

In Bacillus subtilis (strain 168), this protein is Spore coat protein C (cotC).